We begin with the raw amino-acid sequence, 75 residues long: uncharacterized protein (75 aa).

2 helical membrane-spanning segments follow: residues 7–26 (LINA…AASA) and 36–58 (MHLF…FCPV).

It is found in the cell membrane. This is an uncharacterized protein from Bacillus subtilis (strain 168).